Here is a 255-residue protein sequence, read N- to C-terminus: MLLAFDVGNTNIVMGVFKGKKLLHSFRISTDKNKTYDEYGMLVNQLIGYNGISLTEIDDVIISSVVPPLMNTLQVMSLKYFRTKPIVVGPGIKTGINIKYDNPKEVGADRIVNAVAAYELYGGPVIVIDFGTATTFCAISEKGEYLGGIIAPGLMISADALFQRTAKLPKIDLTKPPTVINRNTVASMQSGIIYGHVGMVDYIVTRMKGEFAPSAYVVATGGFANMIAEESKTIDTVNEMLTLEGLRIIYERNKE.

Residue Asp6–Val13 participates in ATP binding. Substrate-binding positions include Tyr100 and Gly107–Arg110. Asp109 functions as the Proton acceptor in the catalytic mechanism. Asp129 is a binding site for K(+). ATP is bound at residue Thr132. Residue Thr184 participates in substrate binding.

It belongs to the type III pantothenate kinase family. Homodimer. NH4(+) is required as a cofactor. The cofactor is K(+).

It localises to the cytoplasm. It catalyses the reaction (R)-pantothenate + ATP = (R)-4'-phosphopantothenate + ADP + H(+). It participates in cofactor biosynthesis; coenzyme A biosynthesis; CoA from (R)-pantothenate: step 1/5. Its function is as follows. Catalyzes the phosphorylation of pantothenate (Pan), the first step in CoA biosynthesis. This Caldanaerobacter subterraneus subsp. tengcongensis (strain DSM 15242 / JCM 11007 / NBRC 100824 / MB4) (Thermoanaerobacter tengcongensis) protein is Type III pantothenate kinase.